The chain runs to 245 residues: Epoxyqueuosine reductase QueH (245 aa).

[4Fe-4S] cluster is bound by residues Cys-52, Cys-53, Cys-131, and Cys-134. Cys-214 and Cys-216 form a disulfide bridge.

This sequence belongs to the QueH family.

It catalyses the reaction epoxyqueuosine(34) in tRNA + AH2 = queuosine(34) in tRNA + A + H2O. Its pathway is tRNA modification; tRNA-queuosine biosynthesis. Functionally, catalyzes the conversion of epoxyqueuosine (oQ) to queuosine (Q), which is a hypermodified base found in the wobble positions of tRNA(Asp), tRNA(Asn), tRNA(His) and tRNA(Tyr). This is Epoxyqueuosine reductase QueH from Haemophilus influenzae (strain ATCC 51907 / DSM 11121 / KW20 / Rd).